We begin with the raw amino-acid sequence, 446 residues long: Saccharopine dehydrogenase [NADP(+), L-glutamate-forming] (446 aa).

Residues 10 to 13 (SGFV), 33 to 35 (CRT), 54 to 55 (DV), isoleucine 75, 97 to 98 (SS), 124 to 126 (LDP), and serine 174 each bind NADP(+). L-saccharopine-binding positions include 98–99 (SY) and aspartate 125. L-saccharopine is bound by residues arginine 223 and 244–246 (TLR).

The protein belongs to the saccharopine dehydrogenase family. As to quaternary structure, interacts with TRM112.

It carries out the reaction L-saccharopine + NADP(+) + H2O = (S)-2-amino-6-oxohexanoate + L-glutamate + NADPH + H(+). Its pathway is amino-acid biosynthesis; L-lysine biosynthesis via AAA pathway; L-lysine from L-alpha-aminoadipate (fungal route): step 2/3. The protein is Saccharopine dehydrogenase [NADP(+), L-glutamate-forming] (LYS9) of Saccharomyces cerevisiae (strain ATCC 204508 / S288c) (Baker's yeast).